The primary structure comprises 608 residues: Albumin (608 aa).

The first 18 residues, 1–18 (MKWVTFLLLLFISGSAFS), serve as a signal peptide directing secretion. Residues 19–24 (RGVFRR) constitute a propeptide that is removed on maturation. 3 consecutive Albumin domains span residues 19-211 (RGVF…AVKE), 212-403 (KALV…EFQP), and 404-601 (LVEE…NLVA). Histidine 27 contributes to the Cu cation binding site. The residue at position 29 (serine 29) is a Phosphoserine. Ca(2+)-binding residues include glutamate 30 and aspartate 37. A disulfide bond links cysteine 77 and cysteine 86. Serine 89 bears the Phosphoserine mark. Residue histidine 91 participates in Zn(2+) binding. Disulfide bonds link cysteine 99-cysteine 115, cysteine 114-cysteine 125, cysteine 148-cysteine 193, cysteine 192-cysteine 201, cysteine 224-cysteine 270, and cysteine 269-cysteine 277. Residue glutamate 268 participates in Ca(2+) binding. Residues histidine 271 and aspartate 273 each coordinate Zn(2+). Aspartate 273, glutamate 276, and aspartate 279 together coordinate Ca(2+). 8 cysteine pairs are disulfide-bonded: cysteine 289-cysteine 303, cysteine 302-cysteine 313, cysteine 340-cysteine 385, cysteine 384-cysteine 393, cysteine 416-cysteine 462, cysteine 461-cysteine 472, cysteine 485-cysteine 501, and cysteine 500-cysteine 511. Position 297 is a phosphoserine (serine 297). Phosphoserine is present on serine 443. Threonine 444 and threonine 446 each carry phosphothreonine. Lysine 460 carries the post-translational modification N6-succinyllysine. Position 513 is a phosphoserine (serine 513). Disulfide bonds link cysteine 538/cysteine 583 and cysteine 582/cysteine 591. At lysine 543 the chain carries N6-succinyllysine. Lysine 558 bears the N6-methyllysine mark. Residue threonine 570 is modified to Phosphothreonine. Lysine 588 bears the N6-succinyllysine mark.

This sequence belongs to the ALB/AFP/VDB family. As to quaternary structure, interacts with FCGRT; this interaction regulates ALB homeostasis. Interacts with TASOR. In plasma, occurs in a covalently-linked complex with chromophore-bound alpha-1-microglobulin; this interaction does not prevent fatty acid binding to ALB. Post-translationally, phosphorylated by FAM20C in the extracellular medium. In terms of tissue distribution, plasma.

It is found in the secreted. Its function is as follows. Binds water, Ca(2+), Na(+), K(+), fatty acids, hormones, bilirubin and drugs. Its main function is the regulation of the colloidal osmotic pressure of blood. Major zinc transporter in plasma, typically binds about 80% of all plasma zinc. Major calcium and magnesium transporter in plasma, binds approximately 45% of circulating calcium and magnesium in plasma. Potentially has more than two calcium-binding sites and might additionally bind calcium in a non-specific manner. The shared binding site between zinc and calcium at residue Asp-273 suggests a crosstalk between zinc and calcium transport in the blood. The rank order of affinity is zinc &gt; calcium &gt; magnesium. Binds to the bacterial siderophore enterobactin and inhibits enterobactin-mediated iron uptake of E.coli from ferric transferrin, and may thereby limit the utilization of iron and growth of enteric bacteria such as E.coli. Does not prevent iron uptake by the bacterial siderophore aerobactin. The polypeptide is Albumin (Alb) (Rattus norvegicus (Rat)).